The following is a 1383-amino-acid chain: Insulin receptor (1383 aa).

An N-terminal signal peptide occupies residues 1–26 (MGSGRGCETTAVPLLMAVAVAGGTAG). Extracellular-side segments run 27–759 (HLYP…TRPS) and 764–957 (SLEE…NIAK). An intrachain disulfide couples cysteine 34 to cysteine 52. Residues asparagine 42, asparagine 51, asparagine 104, and asparagine 137 are each glycosylated (N-linked (GlcNAc...) asparagine). 9 cysteine pairs are disulfide-bonded: cysteine 152–cysteine 181, cysteine 185–cysteine 208, cysteine 195–cysteine 214, cysteine 218–cysteine 227, cysteine 222–cysteine 233, cysteine 234–cysteine 242, cysteine 238–cysteine 251, cysteine 254–cysteine 263, and cysteine 267–cysteine 279. A glycan (N-linked (GlcNAc...) asparagine) is linked at asparagine 241. Asparagine 281 is a glycosylation site (N-linked (GlcNAc...) asparagine). 5 cysteine pairs are disulfide-bonded: cysteine 285-cysteine 310, cysteine 292-cysteine 300, cysteine 314-cysteine 327, cysteine 330-cysteine 334, and cysteine 338-cysteine 359. N-linked (GlcNAc...) asparagine glycosylation occurs at asparagine 321. The N-linked (GlcNAc...) asparagine glycan is linked to asparagine 363. Phosphoserine is present on serine 399. Residue tyrosine 400 is modified to Phosphotyrosine. At serine 406 the chain carries Phosphoserine. 2 N-linked (GlcNAc...) asparagine glycosylation sites follow: asparagine 423 and asparagine 444. A disulfide bond links cysteine 461 and cysteine 494. Residues asparagine 540, asparagine 634, asparagine 652, and asparagine 699 are each glycosylated (N-linked (GlcNAc...) asparagine). A Fibronectin type-III 1 domain is found at 625 to 727 (VPLDPISVSN…SQILKELEES (103 aa)). A disulfide bond links cysteine 675 and cysteine 900. A disordered region spans residues 687–709 (SPPFESDDSQKHNQSEYDDSASE). The insulin-binding stretch occupies residues 734–742 (EDYLHNVVF). The tract at residues 747 to 783 (TSSGNGAEDTRPSRKRRSLEEVGNVTATTPTLPDFPN) is disordered. 2 consecutive Fibronectin type-III domains span residues 754-848 (EDTR…TMPE) and 854-948 (IVGP…VTDY). 4 N-linked (GlcNAc...) asparagine glycosylation sites follow: asparagine 770, asparagine 783, asparagine 921, and asparagine 934. A compositionally biased stretch (polar residues) spans 771 to 783 (VTATTPTLPDFPN). The chain crosses the membrane as a helical span at residues 958–978 (IIIGPLIFVFLFSVVIGSIYL). Topologically, residues 979–1383 (FLRKRQPDGP…VLTLPRSNPS (405 aa)) are cytoplasmic. Residues 997-1000 (NPEY) are important for interaction with IRS1, SHC1 and STAT5B. A Phosphotyrosine; by autocatalysis modification is found at tyrosine 1000. The region spanning 1024–1299 (ITLLRELGQG…LLKDDLHPSF (276 aa)) is the Protein kinase domain. Serine 1034 and lysine 1058 together coordinate ATP. Lysine 1080 is covalently cross-linked (Glycyl lysine isopeptide (Lys-Gly) (interchain with G-Cter in ubiquitin)). Cysteine 1084 is modified (S-nitrosocysteine). 1105–1111 (ELMAHGD) provides a ligand contact to ATP. Catalysis depends on aspartate 1160, which acts as the Proton donor/acceptor. ATP is bound by residues 1164–1165 (RN) and aspartate 1178. Phosphotyrosine; by autocatalysis is present on residues tyrosine 1186, tyrosine 1190, tyrosine 1191, tyrosine 1356, and tyrosine 1362. A disordered region spans residues 1361 to 1383 (PYTHMNGGKKNGRVLTLPRSNPS). The tract at residues 1362 to 1365 (YTHM) is PIK3R1 binding.

The protein belongs to the protein kinase superfamily. Tyr protein kinase family. Insulin receptor subfamily. As to quaternary structure, tetramer of 2 alpha and 2 beta chains linked by disulfide bonds. The alpha chains carry the insulin-binding regions, while the beta chains carry the kinase domain. Forms a hybrid receptor with IGF1R, the hybrid is a tetramer consisting of 1 alpha chain and 1 beta chain of INSR and 1 alpha chain and 1 beta chain of IGF1R. Interacts with SORBS1 but dissociates from it following insulin stimulation. Binds SH2B2. Activated form of INSR interacts (via Tyr-1000) with the PTB/PID domains of IRS1 and SHC1. The sequences surrounding the phosphorylated NPXY motif contribute differentially to either IRS1 or SHC1 recognition. Interacts (via tyrosines in the C-terminus) with IRS2 (via PTB domain and 591-786 AA); the 591-786 would be the primary anchor of IRS2 to INSR while the PTB domain would have a stabilizing action on the interaction with INSR. Interacts with the SH2 domains of the 85 kDa regulatory subunit of PI3K (PIK3R1) in vitro, when autophosphorylated on tyrosine residues. Interacts with SOCS7. Interacts (via the phosphorylated Tyr-1000), with SOCS3. Interacts (via the phosphorylated Tyr-1186, Tyr-1190, Tyr-1191) with SOCS1. Interacts with ARRB2. Interacts with GRB10; this interaction blocks the association between IRS1/IRS2 and INSR, significantly reduces insulin-stimulated tyrosine phosphorylation of IRS1 and IRS2 and thus decreases insulin signaling. Interacts with PDPK1. Interacts (via Tyr-1191) with GRB14 (via BPS domain); this interaction protects the tyrosines in the activation loop from dephosphorylation, but promotes dephosphorylation of Tyr-1000, this results in decreased interaction with, and phosphorylation of, IRS1. Interacts (via subunit alpha) with ENPP1 (via 485-599 AA); this interaction blocks autophosphorylation. Interacts with PTPRE; this interaction is dependent of Tyr-1186, Tyr-1190 and Tyr-1191 of the INSR. Interacts with STAT5B (via SH2 domain). Interacts with PTPRF. Interacts with GRB7. Interacts with CAV2 (tyrosine-phosphorylated form); the interaction is increased with 'Tyr-27'phosphorylation of CAV2. Interacts with ATIC; ATIC together with PRKAA2/AMPK2 and HACD3/PTPLAD1 is proposed to be part of a signaling netwok regulating INSR autophosphorylation and endocytosis. Interacts with the insulin receptor SORL1; this interaction strongly increases its surface exposure, hence strengthens insulin signal reception. Interacts (tyrosine phosphorylated) with CCDC88A/GIV (via SH2-like region); binding requires autophosphorylation of the Insr C-terminal region. Interacts with GNAI3; the interaction is probably mediated by CCDC88A/GIV. Interacts with LMBRD1. Interacts (in response to insulin stimulation) with NCK1; this interaction may recruit PTPN1 to mediate INSR dephosphorylation. Interacts with CD248; this interaction diminishes INSR autophosphorylation. After being transported from the endoplasmic reticulum to the Golgi apparatus, the single glycosylated precursor is further glycosylated and then cleaved, followed by its transport to the plasma membrane. Post-translationally, autophosphorylated on tyrosine residues in response to insulin. Phosphorylation of Tyr-1000 is required for binding to IRS1, SHC1 and STAT5B. May also be phosphorylated at Tyr-1186 and Tyr-1191 by mTORC2. Dephosphorylated by PTPRE at Tyr-1000, Tyr-1186, Tyr-1190 and Tyr-1191. Dephosphorylated by PTPRF and PTPN1. Dephosphorylated by PTPN2; down-regulates insulin-induced signaling. In terms of processing, S-nitrosylation at Cys-1084 by BLVRB inhibits the receptor tyrosine kinase, thereby inhibiting insulin signaling. Ubiquitinated by MARCHF1; leading to degradation thereby reducing surface INSR expression.

It is found in the cell membrane. The protein resides in the late endosome. Its subcellular location is the lysosome. It carries out the reaction L-tyrosyl-[protein] + ATP = O-phospho-L-tyrosyl-[protein] + ADP + H(+). Its activity is regulated as follows. Activated in response to insulin. Autophosphorylation activates the kinase activity. PTPN1, PTPRE and PTPRF dephosphorylate important tyrosine residues, thereby reducing INSR activity. Inhibited by ENPP1. GRB10 and GRB14 inhibit the catalytic activity of the INSR, they block access of substrates to the activated receptor. SOCS1 and SOCS3 act as negative regulators of INSR activity, they bind to the activated INRS and interfere with the phosphorylation of INSR substrates. Functionally, receptor tyrosine kinase which mediates the pleiotropic actions of insulin. Binding of insulin leads to phosphorylation of several intracellular substrates, including, insulin receptor substrates (IRS1, 2, 3, 4), SHC, GAB1, CBL and other signaling intermediates. Each of these phosphorylated proteins serve as docking proteins for other signaling proteins that contain Src-homology-2 domains (SH2 domain) that specifically recognize different phosphotyrosine residues, including the p85 regulatory subunit of PI3K and SHP2. Phosphorylation of IRSs proteins lead to the activation of two main signaling pathways: the PI3K-AKT/PKB pathway, which is responsible for most of the metabolic actions of insulin, and the Ras-MAPK pathway, which regulates expression of some genes and cooperates with the PI3K pathway to control cell growth and differentiation. Binding of the SH2 domains of PI3K to phosphotyrosines on IRS1 leads to the activation of PI3K and the generation of phosphatidylinositol-(3, 4, 5)-triphosphate (PIP3), a lipid second messenger, which activates several PIP3-dependent serine/threonine kinases, such as PDPK1 and subsequently AKT/PKB. The net effect of this pathway is to produce a translocation of the glucose transporter SLC2A4/GLUT4 from cytoplasmic vesicles to the cell membrane to facilitate glucose transport. Moreover, upon insulin stimulation, activated AKT/PKB is responsible for: anti-apoptotic effect of insulin by inducing phosphorylation of BAD; regulates the expression of gluconeogenic and lipogenic enzymes by controlling the activity of the winged helix or forkhead (FOX) class of transcription factors. Another pathway regulated by PI3K-AKT/PKB activation is mTORC1 signaling pathway which regulates cell growth and metabolism and integrates signals from insulin. AKT mediates insulin-stimulated protein synthesis by phosphorylating TSC2 thereby activating mTORC1 pathway. The Ras/RAF/MAP2K/MAPK pathway is mainly involved in mediating cell growth, survival and cellular differentiation of insulin. Phosphorylated IRS1 recruits GRB2/SOS complex, which triggers the activation of the Ras/RAF/MAP2K/MAPK pathway. In addition to binding insulin, the insulin receptor can bind insulin-like growth factors (IGFI and IGFII). When present in a hybrid receptor with IGF1R, binds IGF1. In adipocytes, inhibits lipolysis. This chain is Insulin receptor (Insr), found in Rattus norvegicus (Rat).